Consider the following 1420-residue polypeptide: DNA-directed RNA polymerase subunit beta' (1420 aa).

Zn(2+) contacts are provided by Cys-72, Cys-74, Cys-87, and Cys-90. Residues Asp-462, Asp-464, and Asp-466 each coordinate Mg(2+). 4 residues coordinate Zn(2+): Cys-816, Cys-896, Cys-903, and Cys-906.

Belongs to the RNA polymerase beta' chain family. The RNAP catalytic core consists of 2 alpha, 1 beta, 1 beta' and 1 omega subunit. When a sigma factor is associated with the core the holoenzyme is formed, which can initiate transcription. It depends on Mg(2+) as a cofactor. The cofactor is Zn(2+).

The catalysed reaction is RNA(n) + a ribonucleoside 5'-triphosphate = RNA(n+1) + diphosphate. DNA-dependent RNA polymerase catalyzes the transcription of DNA into RNA using the four ribonucleoside triphosphates as substrates. In Blochmanniella floridana, this protein is DNA-directed RNA polymerase subunit beta'.